Reading from the N-terminus, the 305-residue chain is Protoheme IX farnesyltransferase (305 aa).

Transmembrane regions (helical) follow at residues 29-49 (VTQL…PGMV), 51-71 (WSVL…AFAI), 101-121 (TLIF…VFAN), 123-143 (LTMW…TILL), 151-171 (IVIG…AVSG), 177-197 (AWFL…ALAL), 221-241 (LLHI…PFVY), 244-264 (SGYI…GYAW), and 283-303 (ILYL…KFVP).

The protein belongs to the UbiA prenyltransferase family. Protoheme IX farnesyltransferase subfamily.

It localises to the cell inner membrane. The enzyme catalyses heme b + (2E,6E)-farnesyl diphosphate + H2O = Fe(II)-heme o + diphosphate. The protein operates within porphyrin-containing compound metabolism; heme O biosynthesis; heme O from protoheme: step 1/1. In terms of biological role, converts heme B (protoheme IX) to heme O by substitution of the vinyl group on carbon 2 of heme B porphyrin ring with a hydroxyethyl farnesyl side group. In Cupriavidus metallidurans (strain ATCC 43123 / DSM 2839 / NBRC 102507 / CH34) (Ralstonia metallidurans), this protein is Protoheme IX farnesyltransferase.